The sequence spans 376 residues: Phytanoyl-CoA hydroxylase interacting protein-like (376 aa).

Residues Ser-12 and Ser-15 each carry the phosphoserine modification. Asn-23 carries an N-linked (GlcNAc...) asparagine glycan. Ser-25 carries the post-translational modification Phosphoserine. A glycan (N-linked (GlcNAc...) asparagine) is linked at Asn-37. In terms of domain architecture, Fibronectin type-III spans 52 to 161; it reads VPRNIKISNI…EIIEFCTADY (110 aa).

Belongs to the PHYHIP family.

Functionally, may play a role in the development of the central system. The protein is Phytanoyl-CoA hydroxylase interacting protein-like (PHYHIPL) of Bos taurus (Bovine).